The following is a 315-amino-acid chain: Protein sprouty homolog 2 (315 aa).

Polar residues predominate over residues 1-15 (MEARAQSGNGSQPLL). Disordered stretches follow at residues 1–39 (MEARAQSGNGSQPLLQTPRDGGRQRGEPDPRDALTQQVH) and 51–140 (NTNE…GSSF). The span at 20–32 (DGGRQRGEPDPRD) shows a compositional bias: basic and acidic residues. Low complexity predominate over residues 108–140 (SRSISTVSSGSRSSTRTSTSSSSSEQRLLGSSF). A required for interaction with CAV1 region spans residues 118-315 (SRSSTRTSTS…VPPRNFEKPT (198 aa)). The SPR domain maps to 177 to 291 (RCEDCGKCKC…CYDRVNRPGC (115 aa)). The segment at 178 to 315 (CEDCGKCKCK…VPPRNFEKPT (138 aa)) is required for interaction with TESK1.

Belongs to the sprouty family. As to quaternary structure, forms heterodimers with SPRY1. Forms a tripartite complex containing GAB1, METTL13 and SPRY2. Within the complex interacts with METTL13. Interacts with RAF1. Interacts (via C-terminus) with TESK1 (via C-terminus); the interaction disrupts SPRY2 interaction with GRB2, potentially via disruption of SPRY2 serine dephosphorylation. Interacts with PPP2R1A/PP2A-A and PPP2CA/PP2A-C; the interaction with PPP2CA/PP2A-C is inhibited by interaction with TESK1, possibly by vesicular sequestration of SPRY2. Inhibition of the interaction with the serine/threonine-protein phosphatase 2A (PP2A) holoenzyme results in loss of PP2A-mediated dephosphorylation, resulting in the loss of SPRY2 interaction with GRB2. Interacts with GRB2. Interacts with CBL/C-CBL; the interaction inhibits CBL-mediated ubiquitination of EGFR. Interacts (via C-terminus) with CAV1 (via C-terminus). Post-translationally, cleaved at Pro-144 by the prolyl endopeptidase FAP (seprase) activity (in vitro).

The protein localises to the cytoplasm. It is found in the cytoskeleton. It localises to the cell projection. Its subcellular location is the ruffle membrane. Its function is as follows. Antagonist of fibroblast growth factor (FGF) pathways via inhibition of FGF-mediated phosphorylation of ERK1/2. Thereby acts as an antagonist of FGF-induced retinal lens fiber differentiation, may inhibit limb bud outgrowth and may negatively modulate respiratory organogenesis. Inhibits TGFB-induced epithelial-to-mesenchymal transition in retinal lens epithelial cells. Inhibits CBL/C-CBL-mediated EGFR ubiquitination. In Macaca fascicularis (Crab-eating macaque), this protein is Protein sprouty homolog 2 (SPRY2).